The following is a 230-amino-acid chain: Probable methylthioribulose-1-phosphate dehydratase (230 aa).

Cys87 contributes to the substrate binding site. His105 and His107 together coordinate Zn(2+). Glu129 (proton donor/acceptor) is an active-site residue. His185 lines the Zn(2+) pocket.

Belongs to the aldolase class II family. MtnB subfamily. Zn(2+) is required as a cofactor.

Its subcellular location is the cytoplasm. The enzyme catalyses 5-(methylsulfanyl)-D-ribulose 1-phosphate = 5-methylsulfanyl-2,3-dioxopentyl phosphate + H2O. Its pathway is amino-acid biosynthesis; L-methionine biosynthesis via salvage pathway; L-methionine from S-methyl-5-thio-alpha-D-ribose 1-phosphate: step 2/6. Its function is as follows. Catalyzes the dehydration of methylthioribulose-1-phosphate (MTRu-1-P) into 2,3-diketo-5-methylthiopentyl-1-phosphate (DK-MTP-1-P). In Drosophila grimshawi (Hawaiian fruit fly), this protein is Probable methylthioribulose-1-phosphate dehydratase.